We begin with the raw amino-acid sequence, 571 residues long: Sulfite reductase [NADPH] hemoprotein beta-component (571 aa).

[4Fe-4S] cluster-binding residues include Cys-435, Cys-441, Cys-480, and Cys-484. A siroheme-binding site is contributed by Cys-484.

Belongs to the nitrite and sulfite reductase 4Fe-4S domain family. Alpha(8)-beta(8). The alpha component is a flavoprotein, the beta component is a hemoprotein. Siroheme is required as a cofactor. The cofactor is [4Fe-4S] cluster.

The enzyme catalyses hydrogen sulfide + 3 NADP(+) + 3 H2O = sulfite + 3 NADPH + 4 H(+). It participates in sulfur metabolism; hydrogen sulfide biosynthesis; hydrogen sulfide from sulfite (NADPH route): step 1/1. Its function is as follows. Component of the sulfite reductase complex that catalyzes the 6-electron reduction of sulfite to sulfide. This is one of several activities required for the biosynthesis of L-cysteine from sulfate. The chain is Sulfite reductase [NADPH] hemoprotein beta-component from Serratia proteamaculans (strain 568).